The chain runs to 177 residues: MSRIGKKPVPVPAGVTASVEGQTVKAKGAKGELSFVVHDEVLVKMEDGAVRVDPRDQSREARSKWGMSRTMISNIFVGVKDGFEKKLEISGVGYRAAMQGKNLQLSLGFSHEVVYDVPAGITVAVPKPTEIVVTGIDKQQVGQVAAEIREYRGPEPYKGKGVKYAGEKIVRKEGKKK.

The protein belongs to the universal ribosomal protein uL6 family. As to quaternary structure, part of the 50S ribosomal subunit.

Functionally, this protein binds to the 23S rRNA, and is important in its secondary structure. It is located near the subunit interface in the base of the L7/L12 stalk, and near the tRNA binding site of the peptidyltransferase center. The chain is Large ribosomal subunit protein uL6 from Brucella melitensis biotype 1 (strain ATCC 23456 / CCUG 17765 / NCTC 10094 / 16M).